A 476-amino-acid polypeptide reads, in one-letter code: Aspartyl/glutamyl-tRNA(Asn/Gln) amidotransferase subunit B (476 aa).

Belongs to the GatB/GatE family. GatB subfamily. In terms of assembly, heterotrimer of A, B and C subunits.

The enzyme catalyses L-glutamyl-tRNA(Gln) + L-glutamine + ATP + H2O = L-glutaminyl-tRNA(Gln) + L-glutamate + ADP + phosphate + H(+). It catalyses the reaction L-aspartyl-tRNA(Asn) + L-glutamine + ATP + H2O = L-asparaginyl-tRNA(Asn) + L-glutamate + ADP + phosphate + 2 H(+). In terms of biological role, allows the formation of correctly charged Asn-tRNA(Asn) or Gln-tRNA(Gln) through the transamidation of misacylated Asp-tRNA(Asn) or Glu-tRNA(Gln) in organisms which lack either or both of asparaginyl-tRNA or glutaminyl-tRNA synthetases. The reaction takes place in the presence of glutamine and ATP through an activated phospho-Asp-tRNA(Asn) or phospho-Glu-tRNA(Gln). The sequence is that of Aspartyl/glutamyl-tRNA(Asn/Gln) amidotransferase subunit B from Shouchella clausii (strain KSM-K16) (Alkalihalobacillus clausii).